Consider the following 262-residue polypeptide: Serine/arginine-rich SC35-like splicing factor SCL30A (262 aa).

2 disordered regions span residues 1 to 38 (MRGR…LPTS) and 115 to 262 (ENRK…SPSQ). Phosphoserine occurs at positions 9 and 20. In terms of domain architecture, RRM spans 37-115 (TSLLVRNLRH…RELTVVFAEE (79 aa)). The span at 115-140 (ENRKKPTEMRTRDRGGRSNRFQDRRR) shows a compositional bias: basic and acidic residues. Over residues 150–161 (PPRRGRRSRSRS) the composition is skewed to basic residues. Phosphoserine occurs at positions 166, 174, 176, and 178. Positions 180–190 (QDRRYEKERSY) are enriched in basic and acidic residues. A phosphoserine mark is found at serine 191 and serine 193. Residues 209–226 (VKSHSRSPRRSVSPRKNR) show a composition bias toward basic residues. The span at 234 to 246 (RSQSPVPRQSRSP) shows a compositional bias: low complexity. Phosphoserine occurs at positions 235, 259, and 261.

Belongs to the splicing factor SR family. SCL subfamily. In terms of assembly, component of the spliceosome. Interacts with SNRNP35, CYP59 and RS2Z33.

The protein localises to the nucleus speckle. Involved in intron recognition and spliceosome assembly. Binds probably to multiple 5'-GAAG-3' repeats found in its third intron, suggesting autoregulation of alternative splicing. May be necessary for accurate splicing of the 3' region of introns. In Arabidopsis thaliana (Mouse-ear cress), this protein is Serine/arginine-rich SC35-like splicing factor SCL30A (SCL30A).